A 466-amino-acid polypeptide reads, in one-letter code: Hydroxyacid-oxoacid transhydrogenase, mitochondrial (466 aa).

Lysine 444 carries the post-translational modification N6-acetyllysine. Serine 451 bears the Phosphoserine mark.

The protein belongs to the iron-containing alcohol dehydrogenase family. Hydroxyacid-oxoacid transhydrogenase subfamily.

The protein localises to the mitochondrion. The catalysed reaction is (S)-3-hydroxybutanoate + 2-oxoglutarate = (R)-2-hydroxyglutarate + acetoacetate. It carries out the reaction 4-hydroxybutanoate + 2-oxoglutarate = (R)-2-hydroxyglutarate + succinate semialdehyde. Functionally, catalyzes the cofactor-independent reversible oxidation of gamma-hydroxybutyrate (GHB) to succinic semialdehyde (SSA) coupled to reduction of 2-ketoglutarate (2-KG) to D-2-hydroxyglutarate (D-2-HG). L-3-hydroxybutyrate (L-3-OHB) is also a substrate for HOT when using 2-KG as hydrogen acceptor, resulting in the formation of D-2-HG. In Bos taurus (Bovine), this protein is Hydroxyacid-oxoacid transhydrogenase, mitochondrial (ADHFE1).